The primary structure comprises 307 residues: Probable 2-methylisocitrate lyase 2 (307 aa).

53–55 provides a ligand contact to substrate; that stretch reads SGA. The Mg(2+) site is built by Asp-92 and Asp-94. Substrate-binding positions include 129-130, Arg-164, Glu-194, 216-218, Arg-247, and Arg-276; these read CG and NMT.

This sequence belongs to the isocitrate lyase/PEP mutase superfamily. Methylisocitrate lyase family. Homotetramer; dimer of dimers. The cofactor is Mg(2+).

The enzyme catalyses (2S,3R)-3-hydroxybutane-1,2,3-tricarboxylate = pyruvate + succinate. It functions in the pathway organic acid metabolism; propanoate degradation. In terms of biological role, involved in the catabolism of short chain fatty acids (SCFA) via the 2-methylcitrate cycle I (propionate degradation route). Catalyzes the thermodynamically favored C-C bond cleavage of (2R,3S)-2-methylisocitrate to yield pyruvate and succinate via an alpha-carboxy-carbanion intermediate. This chain is Probable 2-methylisocitrate lyase 2, found in Corynebacterium glutamicum (strain ATCC 13032 / DSM 20300 / JCM 1318 / BCRC 11384 / CCUG 27702 / LMG 3730 / NBRC 12168 / NCIMB 10025 / NRRL B-2784 / 534).